A 365-amino-acid polypeptide reads, in one-letter code: uncharacterized protein (365 aa).

31 to 38 (GPINSGKT) lines the ATP pocket.

The protein belongs to the archaeal ATPase family.

This is an uncharacterized protein from Methanocaldococcus jannaschii (strain ATCC 43067 / DSM 2661 / JAL-1 / JCM 10045 / NBRC 100440) (Methanococcus jannaschii).